Reading from the N-terminus, the 189-residue chain is Ras-like protein 1 (189 aa).

10 to 17 (GAGGVGKS) is a binding site for GTP. Positions 32–40 (YDPTIEDSY) match the Effector region motif. Residues 57–61 (DTAGQ) and 116–119 (NKCD) contribute to the GTP site. Cys-186 is modified (cysteine methyl ester). The S-geranylgeranyl cysteine moiety is linked to residue Cys-186. Positions 187 to 189 (KML) are cleaved as a propeptide — removed in mature form.

This sequence belongs to the small GTPase superfamily. Ras family.

The protein localises to the cell membrane. It catalyses the reaction GTP + H2O = GDP + phosphate + H(+). With respect to regulation, alternates between an inactive form bound to GDP and an active form bound to GTP. Activated by a guanine nucleotide-exchange factor (GEF) and inactivated by a GTPase-activating protein (GAP). Its function is as follows. Ras proteins bind GDP/GTP and possess intrinsic GTPase activity. Plays a role in eye development by regulating cell growth, survival of postmitotic ommatidial cells and differentiation of photoreceptor cells. During larval development, mediates Ptth/tor signaling leading to the production of ecdysone, a hormone required for the initiation of metamorphosis. In Drosophila willistoni (Fruit fly), this protein is Ras-like protein 1.